The chain runs to 264 residues: Thymidylate synthase (264 aa).

Residue R21 participates in dUMP binding. H51 contributes to the (6R)-5,10-methylene-5,6,7,8-tetrahydrofolate binding site. 126-127 (RR) provides a ligand contact to dUMP. C146 acts as the Nucleophile in catalysis. DUMP contacts are provided by residues 166-169 (RSCD), N177, and 207-209 (HLY). D169 provides a ligand contact to (6R)-5,10-methylene-5,6,7,8-tetrahydrofolate. A263 contacts (6R)-5,10-methylene-5,6,7,8-tetrahydrofolate.

The protein belongs to the thymidylate synthase family. Bacterial-type ThyA subfamily. In terms of assembly, homodimer.

The protein localises to the cytoplasm. It catalyses the reaction dUMP + (6R)-5,10-methylene-5,6,7,8-tetrahydrofolate = 7,8-dihydrofolate + dTMP. The protein operates within pyrimidine metabolism; dTTP biosynthesis. Its function is as follows. Catalyzes the reductive methylation of 2'-deoxyuridine-5'-monophosphate (dUMP) to 2'-deoxythymidine-5'-monophosphate (dTMP) while utilizing 5,10-methylenetetrahydrofolate (mTHF) as the methyl donor and reductant in the reaction, yielding dihydrofolate (DHF) as a by-product. This enzymatic reaction provides an intracellular de novo source of dTMP, an essential precursor for DNA biosynthesis. This Citrobacter koseri (strain ATCC BAA-895 / CDC 4225-83 / SGSC4696) protein is Thymidylate synthase.